The following is a 143-amino-acid chain: uncharacterized protein (143 aa).

This is an uncharacterized protein from Mycobacterium tuberculosis (strain CDC 1551 / Oshkosh).